Reading from the N-terminus, the 202-residue chain is Protein Mbar_A1807 (202 aa).

The 192-residue stretch at 5-196 folds into the AMMECR1 domain; it reads VEGRAAVKLA…EKEPCGEVLE (192 aa).

This Methanosarcina barkeri (strain Fusaro / DSM 804) protein is Protein Mbar_A1807.